A 655-amino-acid chain; its full sequence is p-hydroxybenzoic acid efflux pump subunit AaeB (655 aa).

The next 11 helical transmembrane spans lie at Phe-13–Leu-33, Trp-38–Pro-58, Leu-69–Ile-89, Leu-93–Val-113, Trp-121–Leu-141, Glu-152–Ile-172, Leu-370–Val-390, Phe-407–Pro-427, Gln-431–Val-451, Met-459–Phe-479, and Phe-482–Leu-502.

The protein belongs to the aromatic acid exporter ArAE (TC 2.A.85) family.

Its subcellular location is the cell inner membrane. Its function is as follows. Forms an efflux pump with AaeA. Could function as a metabolic relief valve, allowing to eliminate certain compounds when they accumulate to high levels in the cell. In Escherichia coli O6:K15:H31 (strain 536 / UPEC), this protein is p-hydroxybenzoic acid efflux pump subunit AaeB.